Reading from the N-terminus, the 366-residue chain is MISSFHRPTVARVNLQAIKENVASVQKHIPLGVKTYAVVKADAYGHGAVQVSKALLPQVDGYCVSNLDEALQLRQAGIDKEILILGVLLPNELELAVANAITVTIASLDWIALARLEKKECQGLKVHVKVDSGMGRIGLRSSKEVNLLIDSLKELGADVEGIFTHFATADEADDTKFNQQLQFFKKLIAGLEDKPRLVHASNSATSIWHSDTIFNAVRLGIVSYGLNPSGSDLSLPFPLQEALSLESSLVHVKMISAGDTVGYGATYTAKKSEYVGTVPIGYADGWTRNMQGFSVLVDGQFCEIIGRVSMDQLTIRLPKAYPLGTKVTLIGSNQQKNISTTDIANYRNTINYEVLCLLSDRIPRIY.

Residue Lys-40 is the Proton acceptor; specific for D-alanine of the active site. N6-(pyridoxal phosphate)lysine is present on Lys-40. Residue Arg-136 participates in substrate binding. Tyr-263 acts as the Proton acceptor; specific for L-alanine in catalysis. Position 310 (Met-310) interacts with substrate.

It belongs to the alanine racemase family. The cofactor is pyridoxal 5'-phosphate.

It catalyses the reaction L-alanine = D-alanine. It functions in the pathway amino-acid biosynthesis; D-alanine biosynthesis; D-alanine from L-alanine: step 1/1. In terms of biological role, catalyzes the interconversion of L-alanine and D-alanine. May also act on other amino acids. This Streptococcus pyogenes serotype M1 protein is Alanine racemase (alr).